Reading from the N-terminus, the 633-residue chain is Leucine-rich repeat and IQ domain-containing protein 3 (633 aa).

LRR repeat units lie at residues 51 to 72 (SLRV…QGCK), 73 to 94 (KLIK…TFWN), and 98 to 119 (NLKL…CVLS). In terms of domain architecture, LRRCT spans 132 to 179 (CPVSLKKGYRHVLVNSIWPLKALDHHVISDEEIIQNWHLPERFKTFSQ). Residues 215–244 (HNSPVLIIQRWIRGFIVRKHLSPYFTRKRH) form the IQ domain. Residues 322 to 343 (NSKQPRHHIQKGQNEMKSDSED) are disordered. The stretch at 556–616 (EKREKRKYKQ…AKVEFINTYY (61 aa)) forms a coiled coil.

The protein is Leucine-rich repeat and IQ domain-containing protein 3 (Lrriq3) of Rattus norvegicus (Rat).